The primary structure comprises 309 residues: UDP-N-acetylenolpyruvoylglucosamine reductase (309 aa).

The FAD-binding PCMH-type domain maps to 34-199 (RVGGPAQVLF…TSARLRGTPA (166 aa)). Arg179 is a catalytic residue. Ser228 acts as the Proton donor in catalysis. Glu298 is a catalytic residue.

It belongs to the MurB family. It depends on FAD as a cofactor.

It is found in the cytoplasm. The enzyme catalyses UDP-N-acetyl-alpha-D-muramate + NADP(+) = UDP-N-acetyl-3-O-(1-carboxyvinyl)-alpha-D-glucosamine + NADPH + H(+). Its pathway is cell wall biogenesis; peptidoglycan biosynthesis. Its function is as follows. Cell wall formation. This chain is UDP-N-acetylenolpyruvoylglucosamine reductase, found in Rhodopseudomonas palustris (strain ATCC BAA-98 / CGA009).